The sequence spans 262 residues: Type III pantothenate kinase (262 aa).

6–13 (DAGNTNMV) contributes to the ATP binding site. Residues Y100 and 107–110 (GADR) contribute to the substrate site. D109 functions as the Proton acceptor in the catalytic mechanism. Residue D129 coordinates K(+). T132 provides a ligand contact to ATP. T184 contributes to the substrate binding site.

This sequence belongs to the type III pantothenate kinase family. Homodimer. Requires NH4(+) as cofactor. K(+) serves as cofactor.

It is found in the cytoplasm. It carries out the reaction (R)-pantothenate + ATP = (R)-4'-phosphopantothenate + ADP + H(+). It participates in cofactor biosynthesis; coenzyme A biosynthesis; CoA from (R)-pantothenate: step 1/5. Its function is as follows. Catalyzes the phosphorylation of pantothenate (Pan), the first step in CoA biosynthesis. This Clostridium tetani (strain Massachusetts / E88) protein is Type III pantothenate kinase.